The chain runs to 51 residues: Sec-independent protein translocase protein TatA (51 aa).

A helical membrane pass occupies residues 1–21 (MGMSFSHLLIILLIIFVLFGA).

The protein belongs to the TatA/E family. In terms of assembly, the Tat system comprises two distinct complexes: a TatABC complex, containing multiple copies of TatA, TatB and TatC subunits, and a separate TatA complex, containing only TatA subunits. Substrates initially bind to the TatABC complex, which probably triggers association of the separate TatA complex to form the active translocon.

The protein resides in the cell inner membrane. In terms of biological role, part of the twin-arginine translocation (Tat) system that transports large folded proteins containing a characteristic twin-arginine motif in their signal peptide across membranes. TatA could form the protein-conducting channel of the Tat system. The chain is Sec-independent protein translocase protein TatA from Rickettsia bellii (strain RML369-C).